The primary structure comprises 121 residues: Basic phospholipase A2 homolog piratoxin-2 (121 aa).

7 disulfides stabilise this stretch: Cys-26–Cys-115, Cys-28–Cys-44, Cys-43–Cys-95, Cys-49–Cys-121, Cys-50–Cys-88, Cys-57–Cys-81, and Cys-75–Cys-86. The tract at residues 105–117 is important for membrane-damaging activities in eukaryotes and bacteria; heparin-binding; the sequence is KKYRYHLKPFCKK.

This sequence belongs to the phospholipase A2 family. Group II subfamily. K49 sub-subfamily. In terms of assembly, homodimer; non-covalently linked. As to expression, expressed by the venom gland.

The protein resides in the secreted. Snake venom phospholipase A2 (PLA2) homolog that lacks enzymatic activity. Shows myotoxic activity and edema-inducing activities in vivo. A model of myotoxic mechanism has been proposed: an apo Lys49-PLA2 is activated by the entrance of a hydrophobic molecule (e.g. fatty acid) at the hydrophobic channel of the protein leading to a reorientation of a monomer. This reorientation causes a transition between 'inactive' to 'active' states, causing alignment of C-terminal and membrane-docking sites (MDoS) side-by-side and putting the membrane-disruption sites (MDiS) in the same plane, exposed to solvent and in a symmetric position for both monomers. The MDoS region stabilizes the toxin on membrane by the interaction of charged residues with phospholipid head groups. Subsequently, the MDiS region destabilizes the membrane with penetration of hydrophobic residues. This insertion causes a disorganization of the membrane, allowing an uncontrolled influx of ions (i.e. calcium and sodium), and eventually triggering irreversible intracellular alterations and cell death. In Bothrops pirajai (Piraja's lancehead), this protein is Basic phospholipase A2 homolog piratoxin-2.